The primary structure comprises 126 residues: Small ribosomal subunit protein uS11 (126 aa).

This sequence belongs to the universal ribosomal protein uS11 family. As to quaternary structure, part of the 30S ribosomal subunit. Interacts with proteins S7 and S18. Binds to IF-3.

Located on the platform of the 30S subunit, it bridges several disparate RNA helices of the 16S rRNA. Forms part of the Shine-Dalgarno cleft in the 70S ribosome. This chain is Small ribosomal subunit protein uS11, found in Treponema pallidum (strain Nichols).